The primary structure comprises 681 residues: DNA ligase (681 aa).

Residues 42 to 46 (DAEYD), 91 to 92 (SL), and Glu120 each bind NAD(+). The active-site N6-AMP-lysine intermediate is the Lys122. Arg143, Glu180, Lys302, and Lys326 together coordinate NAD(+). Cys420, Cys423, Cys438, and Cys444 together coordinate Zn(2+). A BRCT domain is found at 603-681 (ADAQPLLGQT…EAGLIELIGL (79 aa)).

Belongs to the NAD-dependent DNA ligase family. LigA subfamily. The cofactor is Mg(2+). It depends on Mn(2+) as a cofactor.

It carries out the reaction NAD(+) + (deoxyribonucleotide)n-3'-hydroxyl + 5'-phospho-(deoxyribonucleotide)m = (deoxyribonucleotide)n+m + AMP + beta-nicotinamide D-nucleotide.. In terms of biological role, DNA ligase that catalyzes the formation of phosphodiester linkages between 5'-phosphoryl and 3'-hydroxyl groups in double-stranded DNA using NAD as a coenzyme and as the energy source for the reaction. It is essential for DNA replication and repair of damaged DNA. This Shewanella amazonensis (strain ATCC BAA-1098 / SB2B) protein is DNA ligase.